A 436-amino-acid chain; its full sequence is GTPase Der (436 aa).

EngA-type G domains follow at residues 4 to 167 (PVIA…PTDL) and 175 to 351 (IKFS…ENQN). GTP is bound by residues 10–17 (GRPNVGKS), 57–61 (DTGGI), 119–122 (NKAD), 181–188 (GRPNVGKS), 229–233 (DTAGI), and 294–297 (NKWD). Residues 352–436 (RRIQSALLND…PIHLIPRQRK (85 aa)) form the KH-like domain.

Belongs to the TRAFAC class TrmE-Era-EngA-EngB-Septin-like GTPase superfamily. EngA (Der) GTPase family. As to quaternary structure, associates with the 50S ribosomal subunit.

Its function is as follows. GTPase that plays an essential role in the late steps of ribosome biogenesis. The protein is GTPase Der of Latilactobacillus sakei subsp. sakei (strain 23K) (Lactobacillus sakei subsp. sakei).